The following is a 288-amino-acid chain: Homoserine kinase (288 aa).

Proline 79–alanine 89 contacts ATP.

The protein belongs to the GHMP kinase family. Homoserine kinase subfamily.

It is found in the cytoplasm. It carries out the reaction L-homoserine + ATP = O-phospho-L-homoserine + ADP + H(+). The protein operates within amino-acid biosynthesis; L-threonine biosynthesis; L-threonine from L-aspartate: step 4/5. Functionally, catalyzes the ATP-dependent phosphorylation of L-homoserine to L-homoserine phosphate. In Listeria welshimeri serovar 6b (strain ATCC 35897 / DSM 20650 / CCUG 15529 / CIP 8149 / NCTC 11857 / SLCC 5334 / V8), this protein is Homoserine kinase.